Here is a 501-residue protein sequence, read N- to C-terminus: Protein MGF 505-4R (501 aa).

Belongs to the asfivirus MGF 505 family.

Its function is as follows. Plays a role in virus cell tropism, and may be required for efficient virus replication in macrophages. In African swine fever virus (isolate Tick/South Africa/Pretoriuskop Pr4/1996) (ASFV), this protein is Protein MGF 505-4R.